We begin with the raw amino-acid sequence, 1262 residues long: Histone-lysine N-methyltransferase eggless (1262 aa).

Residues 1 to 194 (MSGQPTAVDC…MEVDQDVEES (194 aa)) are disordered. Basic and acidic residues-rich tracts occupy residues 26–41 (ASREKSYGLPVRKGEN), 50–61 (AAKDVEIEELTH), and 81–99 (APDEPGKLADESEDRKGEN). Low complexity predominate over residues 157–166 (SSISSPTSES). Over residues 167 to 179 (FPEKDEKTNKENE) the composition is skewed to basic and acidic residues. Serine 215 is subject to Phosphoserine. Residue threonine 217 is modified to Phosphothreonine. A coiled-coil region spans residues 353–420 (EKSDFSKNKL…LEKVQTTADK (68 aa)). Tudor domains are found at residues 529–602 (RLTI…SEKV) and 629–686 (QCTR…RETQ). The interval 743–764 (SSAATPAGGRTNAGGVSTSNSA) is disordered. Residues 818-884 (LDSYSPLAKP…DNFDFTPDLK (67 aa)) enclose the MBD domain. The Pre-SET domain maps to 946–1018 (LCCDCEDDCS…NCLNRVVQFS (73 aa)). Zn(2+)-binding residues include cysteine 948, cysteine 950, cysteine 954, cysteine 960, cysteine 962, cysteine 1000, cysteine 1004, cysteine 1006, and cysteine 1010. Residues 1021–1237 (MKLQVFKTSN…SGTELTWNYN (217 aa)) enclose the SET domain. Residues 1031–1033 (RGW), aspartate 1069, and tyrosine 1071 contribute to the S-adenosyl-L-methionine site. Over residues 1086–1097 (EGYESEVDHSDP) the composition is skewed to basic and acidic residues. Residues 1086–1148 (EGYESEVDHS…QSSELDSQER (63 aa)) are disordered. The segment covering 1098 to 1113 (DAEEDNGGPDAEDDDD) has biased composition (acidic residues). The segment covering 1129-1141 (RSGSTQNSSTQSS) has biased composition (low complexity). S-adenosyl-L-methionine contacts are provided by residues arginine 1191 and 1194-1195 (NH). Zn(2+)-binding residues include cysteine 1197, cysteine 1250, cysteine 1252, and cysteine 1257. A Post-SET domain is found at 1246-1262 (KVLYCQCGAPNCRLRLL).

This sequence belongs to the class V-like SAM-binding methyltransferase superfamily. Histone-lysine methyltransferase family. Suvar3-9 subfamily. As to expression, expressed in ovary (at protein level).

Its subcellular location is the nucleus. The protein localises to the chromosome. It carries out the reaction L-lysyl(9)-[histone H3] + 3 S-adenosyl-L-methionine = N(6),N(6),N(6)-trimethyl-L-lysyl(9)-[histone H3] + 3 S-adenosyl-L-homocysteine + 3 H(+). Histone methyltransferase that specifically trimethylates 'Lys-10' of histone H3 (H3K9me3) in ovary. H3K9me3 represents a specific tag for epigenetic transcriptional repression by recruiting Su(var)205/HP1 to methylated histones. Plays a central role during oogenesis. The polypeptide is Histone-lysine N-methyltransferase eggless (egg) (Drosophila melanogaster (Fruit fly)).